A 959-amino-acid chain; its full sequence is DNA translocase FtsK 1 (959 aa).

Helical transmembrane passes span 1–21 (MGLG…WRYV), 39–59 (IWLA…LTSG), and 83–103 (GWTG…PMVF). The Cytoplasmic segment spans residues 104–959 (GHSWRQLLAR…REVIAPGGGD (856 aa)). The tract at residues 122–427 (PVQADARHDE…AAPPPPAVPA (306 aa)) is disordered. Basic and acidic residues predominate over residues 126–136 (DARHDEADDGL). Composition is skewed to low complexity over residues 220–229 (ATPKAATQAP) and 264–286 (APSA…DAPA). The span at 287–298 (SAPPEPAEPSPP) shows a compositional bias: pro residues. Acidic residues predominate over residues 333–379 (PEPEPEPEAETEVTPEAEAEPEAEPEAEAEPEAEAEAEAEAEAEPEA). Over residues 380-403 (EAPAPESVAPALQEAEAATAAEAP) the composition is skewed to low complexity. One can recognise a FtsK domain in the interval 605 to 814 (GNPVVTDLAR…FQVSSKIDSR (210 aa)). 625-630 (GSGKSV) provides a ligand contact to ATP.

It belongs to the FtsK/SpoIIIE/SftA family. In terms of assembly, homohexamer. Forms a ring that surrounds DNA.

The protein localises to the cell inner membrane. Functionally, essential cell division protein that coordinates cell division and chromosome segregation. The N-terminus is involved in assembly of the cell-division machinery. The C-terminus functions as a DNA motor that moves dsDNA in an ATP-dependent manner towards the dif recombination site, which is located within the replication terminus region. Translocation stops specifically at Xer-dif sites, where FtsK interacts with the Xer recombinase, allowing activation of chromosome unlinking by recombination. FtsK orienting polar sequences (KOPS) guide the direction of DNA translocation. FtsK can remove proteins from DNA as it translocates, but translocation stops specifically at XerCD-dif site, thereby preventing removal of XerC and XerD from dif. This chain is DNA translocase FtsK 1 (ftsK1), found in Ralstonia nicotianae (strain ATCC BAA-1114 / GMI1000) (Ralstonia solanacearum).